Here is a 162-residue protein sequence, read N- to C-terminus: Allophycocyanin beta chain (162 aa).

An N4-methylasparagine modification is found at Asn72. Residue Cys82 coordinates (2R,3E)-phycocyanobilin.

The protein belongs to the phycobiliprotein family. As to quaternary structure, heterodimer of an alpha and a beta chain. Contains one covalently linked phycocyanobilin chromophore.

It localises to the cellular thylakoid membrane. In terms of biological role, light-harvesting photosynthetic bile pigment-protein from the phycobiliprotein complex. Allophycocyanin has a maximum absorption at approximately 650 nanometers. The chain is Allophycocyanin beta chain from Microchaete diplosiphon (Fremyella diplosiphon).